The sequence spans 121 residues: Large ribosomal subunit protein uL18 (121 aa).

The protein belongs to the universal ribosomal protein uL18 family. In terms of assembly, part of the 50S ribosomal subunit; part of the 5S rRNA/L5/L18/L25 subcomplex. Contacts the 5S and 23S rRNAs.

In terms of biological role, this is one of the proteins that bind and probably mediate the attachment of the 5S RNA into the large ribosomal subunit, where it forms part of the central protuberance. The polypeptide is Large ribosomal subunit protein uL18 (Moorella thermoacetica (strain ATCC 39073 / JCM 9320)).